The chain runs to 247 residues: Flavin-dependent thymidylate synthase (247 aa).

The ThyX domain occupies 1-237; the sequence is MDVKLLEATD…PKTFEYYEQE (237 aa). DUMP contacts are provided by residues 85–88, 98–100, and Arg176; these read QITR and SMR. 88–90 contacts FAD; sequence RHR. The ThyX motif signature appears at 88–98; sequence RHRHVSFDVQS. Residues 192–194 and His198 contribute to the FAD site; that span reads NAR. Arg203 contributes to the dUMP binding site. Arg203 serves as the catalytic Involved in ionization of N3 of dUMP, leading to its activation.

It belongs to the thymidylate synthase ThyX family. Homotetramer. It depends on FAD as a cofactor.

It catalyses the reaction dUMP + (6R)-5,10-methylene-5,6,7,8-tetrahydrofolate + NADPH + H(+) = dTMP + (6S)-5,6,7,8-tetrahydrofolate + NADP(+). Its pathway is pyrimidine metabolism; dTTP biosynthesis. Catalyzes the reductive methylation of 2'-deoxyuridine-5'-monophosphate (dUMP) to 2'-deoxythymidine-5'-monophosphate (dTMP) while utilizing 5,10-methylenetetrahydrofolate (mTHF) as the methyl donor, and NADPH and FADH(2) as the reductant. The protein is Flavin-dependent thymidylate synthase of Haloarcula marismortui (strain ATCC 43049 / DSM 3752 / JCM 8966 / VKM B-1809) (Halobacterium marismortui).